The sequence spans 1240 residues: Phospholipid-transporting ATPase 6 (1240 aa).

Topologically, residues 1–75 (MARRRIRSRI…TTRYNLLTFL (75 aa)) are cytoplasmic. Residues 76 to 97 (PKCLYEQFHRVANFYFLVAAIL) traverse the membrane as a helical segment. Topologically, residues 98 to 101 (SVFP) are extracellular. The helical transmembrane segment at 102–124 (LSPFNKWSMIAPLVFVVGLSMGK) threads the bilayer. The Cytoplasmic segment spans residues 125–306 (EALEDWRRFM…SRIEKRMDYI (182 aa)). Residues 307-328 (IYTLFALLLTVSFISSLGFAVM) traverse the membrane as a helical segment. At 329–360 (TKLLMAEWWYLRPDKPESLTNPTNPLYAWVVH) the chain is on the extracellular side. Residues 361–378 (LITALLLYGYLIPISLYV) form a helical membrane-spanning segment. The Cytoplasmic segment spans residues 379–943 (SIEVVKVLQA…HGHWCYKRIA (565 aa)). Aspartate 426 (4-aspartylphosphate intermediate) is an active-site residue. Residue lysine 625 forms a Glycyl lysine isopeptide (Lys-Gly) (interchain with G-Cter in ubiquitin) linkage. Mg(2+) is bound by residues aspartate 888 and aspartate 892. Residues 944 to 963 (QMICYFFYKNITFGLTLFYF) form a helical membrane-spanning segment. The Extracellular portion of the chain corresponds to 964–977 (ECFTGFSGQSIYND). Residues 978 to 997 (SYLLLFNVVLTSLPVISLGV) traverse the membrane as a helical segment. Residues 998–1027 (FEQDVPSDVCLQFPALYQQGPKNLFFDWYR) are Cytoplasmic-facing. A helical membrane pass occupies residues 1028–1050 (ILGWMGNGVYASIVIFTLNLGIF). Residues 1051-1063 (HVQSFRSDGQTAD) lie on the Extracellular side of the membrane. The helical transmembrane segment at 1064–1086 (MNAMGTAMFTCIIWAVNVQIALT) threads the bilayer. The Cytoplasmic segment spans residues 1087-1092 (MSHFTW). Residues 1093–1113 (IQHVMIWGSIGAWYVFLALYG) form a helical membrane-spanning segment. The Extracellular segment spans residues 1114–1130 (MLPVKLSGNIFHMLVEI). Residues 1131–1155 (LAPAPIFWLTSLLVIAATTLPYLFH) traverse the membrane as a helical segment. Residues 1156–1240 (ISYQRSVNPL…SNDTPSSNSQ (85 aa)) lie on the Cytoplasmic side of the membrane.

It belongs to the cation transport ATPase (P-type) (TC 3.A.3) family. Type IV subfamily.

It is found in the cell membrane. It localises to the endomembrane system. It carries out the reaction ATP + H2O + phospholipidSide 1 = ADP + phosphate + phospholipidSide 2.. Involved in transport of phospholipids and in regulation of pollen plasma membrane lipid asymmetry. This is Phospholipid-transporting ATPase 6 from Arabidopsis thaliana (Mouse-ear cress).